The sequence spans 358 residues: Protein SGT1 homolog B (358 aa).

TPR repeat units lie at residues 2 to 35 (AKELAEKAKEAFLDDDFDVAVDLYSKAIDLDPNC), 37 to 69 (AFFADRAQANIKIDNFTEAVVDANKAIELEPTL), and 70 to 103 (AKAYLRKGTACMKLEEYSTAKAALEKGASVAPNE). Positions 157-246 (KPMFRHEFYQ…AEIITWASLE (90 aa)) constitute a CS domain. Residues 255–275 (PKPNVSSALSQRPVYPSSKPA) are disordered. Residues 268–358 (VYPSSKPAKD…DGMELKKWEY (91 aa)) form the SGS domain.

The protein belongs to the SGT1 family. Interacts with RAR1 and HSP90-2. Interacts (via SGS domain) with HSC70-1 and HSC70-3.

It is found in the cytoplasm. The protein localises to the nucleus. Involved in plant innate immunity. Essential for race-specific resistance conferred by multiple R genes, including RPP7, recognizing different oomycete pathogen isolates like avirulent Hyaloperonospora arabidopsidis (downy mildew). Contributes additively with RAR1 to RPP5-dependent resistance. Not required for RPM1, RPS2, RPS4 and RPS5-mediated resistance. Functions as a negative regulator of RPS5 accumulation by assisting its degradation. May be involved in heat shock response by associating with HSC70-1 chaperone. Required for the SCF(TIR1)-mediated degradation of Aux/IAA proteins, but maybe not for SCF(TIR1) assembly or binding to its Aux/IAA substrates. Probably required for SCF-mediated ubiquitination, by coupling HSP90 to SCF complex for ubiquitination of HSP90 client proteins. Required for the coronatine/jasmonic acid-mediated signal transduction pathway. This chain is Protein SGT1 homolog B, found in Arabidopsis thaliana (Mouse-ear cress).